A 633-amino-acid chain; its full sequence is Probable potassium transport system protein Kup (633 aa).

12 helical membrane passes run 21–41 (LAVG…LYAF), 61–81 (LVSL…VLFL), 107–127 (TAVL…DAMI), 145–165 (PTLS…LFAI), 176–196 (FFGP…IMHI), 219–239 (GFLG…AEAL), 255–275 (WFVL…ALVL), 293–313 (ALLP…QAVI), 345–365 (IFLP…VLSF), 371–391 (LATA…IMAF), 402–422 (LPMA…FLGA), and 427–447 (IHDG…IMWT).

The protein belongs to the HAK/KUP transporter (TC 2.A.72) family.

The protein resides in the cell inner membrane. The catalysed reaction is K(+)(in) + H(+)(in) = K(+)(out) + H(+)(out). Its function is as follows. Transport of potassium into the cell. Likely operates as a K(+):H(+) symporter. The sequence is that of Probable potassium transport system protein Kup from Rhizobium rhizogenes (strain K84 / ATCC BAA-868) (Agrobacterium radiobacter).